Reading from the N-terminus, the 183-residue chain is Ribosome rescue factor SmrB (183 aa).

In terms of domain architecture, Smr spans 98 to 173; that stretch reads LDLHGLTQLQ…GDAALLVLIE (76 aa).

The protein belongs to the SmrB family. As to quaternary structure, associates with collided ribosomes, but not with correctly translating polysomes.

Acts as a ribosome collision sensor. Detects stalled/collided disomes (pairs of ribosomes where the leading ribosome is stalled and a second ribosome has collided with it) and endonucleolytically cleaves mRNA at the 5' boundary of the stalled ribosome. Stalled/collided disomes form a new interface (primarily via the 30S subunits) that binds SmrB. Cleaved mRNA becomes available for tmRNA ligation, leading to ribosomal subunit dissociation and rescue of stalled ribosomes. This chain is Ribosome rescue factor SmrB, found in Escherichia coli O17:K52:H18 (strain UMN026 / ExPEC).